Consider the following 414-residue polypeptide: Tyrosine--tRNA ligase (414 aa).

Tyr38 is an L-tyrosine binding site. A 'HIGH' region motif is present at residues 43–52; that stretch reads PTATSLHLGN. Tyr165 and Gln169 together coordinate L-tyrosine. The 'KMSKS' region motif lies at 228 to 232; it reads KFGKS. ATP is bound at residue Lys231. In terms of domain architecture, S4 RNA-binding spans 349-414; that stretch reads FNANQIIDLG…KKYFFMIELI (66 aa).

It belongs to the class-I aminoacyl-tRNA synthetase family. TyrS type 1 subfamily. Homodimer.

Its subcellular location is the cytoplasm. The enzyme catalyses tRNA(Tyr) + L-tyrosine + ATP = L-tyrosyl-tRNA(Tyr) + AMP + diphosphate + H(+). Functionally, catalyzes the attachment of tyrosine to tRNA(Tyr) in a two-step reaction: tyrosine is first activated by ATP to form Tyr-AMP and then transferred to the acceptor end of tRNA(Tyr). This is Tyrosine--tRNA ligase from Mesomycoplasma hyopneumoniae (strain 7448) (Mycoplasma hyopneumoniae).